Reading from the N-terminus, the 437-residue chain is GTPase Obg (437 aa).

In terms of domain architecture, Obg spans 2–160; sequence SMFLDTAKIS…RQLELELKIL (159 aa). Residues 161–338 enclose the OBG-type G domain; that stretch reads ADVGLVGFPS…LLEATAELLA (178 aa). GTP is bound by residues 167-174, 192-196, 214-217, 284-287, and 319-321; these read GFPSVGKS, FTTIV, DLPG, NKMD, and SSL. Mg(2+) is bound by residues Ser-174 and Thr-194. The 79-residue stretch at 359-437 folds into the OCT domain; that stretch reads GFAETEKDFE…IGKFEFEFVD (79 aa).

Belongs to the TRAFAC class OBG-HflX-like GTPase superfamily. OBG GTPase family. In terms of assembly, monomer. Mg(2+) is required as a cofactor.

It is found in the cytoplasm. An essential GTPase which binds GTP, GDP and possibly (p)ppGpp with moderate affinity, with high nucleotide exchange rates and a fairly low GTP hydrolysis rate. Plays a role in control of the cell cycle, stress response, ribosome biogenesis and in those bacteria that undergo differentiation, in morphogenesis control. The chain is GTPase Obg from Streptococcus pyogenes serotype M5 (strain Manfredo).